The following is a 346-amino-acid chain: Quinolinate synthase (346 aa).

Iminosuccinate contacts are provided by His-47 and Ser-68. Cys-113 is a binding site for [4Fe-4S] cluster. Residues 139–141 (YAN) and Ser-156 each bind iminosuccinate. Residue Cys-200 participates in [4Fe-4S] cluster binding. Residues 226-228 (HPE) and Thr-243 contribute to the iminosuccinate site. Cys-297 is a binding site for [4Fe-4S] cluster.

The protein belongs to the quinolinate synthase family. Type 1 subfamily. It depends on [4Fe-4S] cluster as a cofactor.

Its subcellular location is the cytoplasm. The catalysed reaction is iminosuccinate + dihydroxyacetone phosphate = quinolinate + phosphate + 2 H2O + H(+). It functions in the pathway cofactor biosynthesis; NAD(+) biosynthesis; quinolinate from iminoaspartate: step 1/1. In terms of biological role, catalyzes the condensation of iminoaspartate with dihydroxyacetone phosphate to form quinolinate. The polypeptide is Quinolinate synthase (Photorhabdus laumondii subsp. laumondii (strain DSM 15139 / CIP 105565 / TT01) (Photorhabdus luminescens subsp. laumondii)).